A 565-amino-acid chain; its full sequence is 2-isopropylmalate synthase (565 aa).

Residues 37–312 (PRWCSVDLRD…DPMIDLSDID (276 aa)) form the Pyruvate carboxyltransferase domain. Mg(2+) contacts are provided by Asp46, His251, His253, and Asn287. Residues 446–565 (EGGDPAASLE…SAVNRASRES (120 aa)) form a regulatory domain region.

This sequence belongs to the alpha-IPM synthase/homocitrate synthase family. LeuA type 2 subfamily. Homodimer. The cofactor is Mg(2+).

The protein localises to the cytoplasm. It carries out the reaction 3-methyl-2-oxobutanoate + acetyl-CoA + H2O = (2S)-2-isopropylmalate + CoA + H(+). It participates in amino-acid biosynthesis; L-leucine biosynthesis; L-leucine from 3-methyl-2-oxobutanoate: step 1/4. Functionally, catalyzes the condensation of the acetyl group of acetyl-CoA with 3-methyl-2-oxobutanoate (2-ketoisovalerate) to form 3-carboxy-3-hydroxy-4-methylpentanoate (2-isopropylmalate). In Parafrankia sp. (strain EAN1pec), this protein is 2-isopropylmalate synthase.